Here is a 135-residue protein sequence, read N- to C-terminus: DNA-directed RNA polymerase subunit omega (135 aa).

It belongs to the RNA polymerase subunit omega family. The RNAP catalytic core consists of 2 alpha, 1 beta, 1 beta' and 1 omega subunit. When a sigma factor is associated with the core the holoenzyme is formed, which can initiate transcription.

The catalysed reaction is RNA(n) + a ribonucleoside 5'-triphosphate = RNA(n+1) + diphosphate. Promotes RNA polymerase assembly. Latches the N- and C-terminal regions of the beta' subunit thereby facilitating its interaction with the beta and alpha subunits. In Sinorhizobium medicae (strain WSM419) (Ensifer medicae), this protein is DNA-directed RNA polymerase subunit omega.